The sequence spans 168 residues: Pleiotrophin (168 aa).

The signal sequence occupies residues 1–32 (MSSQQYQQQRRKFAAAFLALIFILAAVDTAEA). Cystine bridges form between Cys-47–Cys-76, Cys-55–Cys-85, Cys-62–Cys-89, Cys-99–Cys-131, and Cys-109–Cys-141. Chondroitin sulfate binding stretches follow at residues 92–99 (KKQFGAEC) and 123–131 (KRALHNADC). Residues 139–168 (KPCGKLTKPKPQAESKKKKKEGKKQEKMLD) form a disordered region. Positions 147–168 (PKPQAESKKKKKEGKKQEKMLD) are chondroitin sulfate A binding.

This sequence belongs to the pleiotrophin family. In terms of assembly, interacts with ALK and NEK6. Interacts with PTPRZ1 (via chondroitin sulfate groups); promotes formation of homooligomers; oligomerization impairs tyrosine phosphatase activity. Forms a complex with PTPRZ1 and CTNNB1; this complex inactivates PTPRZ1 protein tyrosine phosphatase activity through PTN interaction and stimulates tyrosine phosphorylation of CTNNB1. Interacts with ITGB3 and ITGA5. Forms a complex with PTPRZ1 and integrin alpha-V/beta-3 (ITGAV:ITGB3) that stimulates endothelial cell migration through ITGB3 'Tyr-773' phosphorylation. Interacts with SDC3 (via heparan sulfate chains); this interaction mediates the neurite outgrowth-promoting signal from PTN to the cytoskeleton of growing neurites; this interaction mediates osteoblast recruitment. Interacts with GPC2 (via heparan sulfate); this interaction promotes neurite outgrowth through binding of PTN with chondroitin sulfate of proteoglycans, thereby releasing PTPRS of chondroitin sulfate proteoglycans (CSPGs) and leading to binding with heparan sulfate of GPC2. Post-translationally, phosphorylated by NEK6. As to expression, osteoblast and brain. Expressed in the follicular epithelium and granulosa cells of the ovary. Strongly expressed in the uterus of newborn mice, and the degree of expression decreased in one-week-old mice, although the expression continues even in the uteri of adult mice. Expression gradually increases from proestrus to estrus, then decreases sharply, and thereafter gradually increased again. strongly expressed in the cochlea of WT mice 1 week after birth, and then the expression decreased and was undetectable by week 8 after birth. Expressed around the cell soma of osteocytes and apparently captured in the unmineralized interstitial matrix surrounding the cells. Furthermore distributed throughout the intraosseous canalicular porosity, being localized in the unmineralized matrix around the cell processes. Strongly expressed in the innermost layer of the periosteum.

It localises to the secreted. Functionally, secreted growth factor that mediates its signal through cell-surface proteoglycan and non-proteoglycan receptors. Binds cell-surface proteoglycan receptor via their chondroitin sulfate (CS) groups. Thereby regulates many processes like cell proliferation, cell survival, cell growth, cell differentiation and cell migration in several tissues namely neuron and bone. Also plays a role in synaptic plasticity and learning-related behavior by inhibiting long-term synaptic potentiation. Binds PTPRZ1, leading to neutralization of the negative charges of the CS chains of PTPRZ1, inducing PTPRZ1 clustering, thereby causing the dimerization and inactivation of its phosphatase activity leading to increased tyrosine phosphorylation of each of the PTPRZ1 substrates like ALK or AFAP1L2 in order to activate the PI3K-AKT pathway. Through PTPRZ1 binding controls oligodendrocyte precursor cell differentiation by enhancing the phosphorylation of AFAP1L2 in order to activate the PI3K-AKT pathway. Forms a complex with PTPRZ1 and integrin alpha-V/beta-3 (ITGAV:ITGB3) that stimulates endothelial cell migration through SRC dephosphorylation and activation that consequently leads to ITGB3 'Tyr-773' phosphorylation. In adult hippocampus promotes dendritic arborization, spine development, and functional integration and connectivity of newborn granule neurons through ALK by activating AKT signaling pathway. Binds GPC2 and chondroitin sulfate proteoglycans (CSPGs) at the neuron surface, leading to abrogation of binding between PTPRS and CSPGs and neurite outgrowth promotion. Binds SDC3 and mediates bone formation by recruiting and attaching osteoblasts/osteoblast precursors to the sites for new bone deposition. Binds ALK and promotes cell survival and cell proliferation through MAPK pathway activation. Inhibits proliferation and enhances differentiation of neural stem cells by inhibiting FGF2-induced fibroblast growth factor receptor signaling pathway. Mediates regulatory mechanisms in normal hemostasis and in hematopoietic regeneration and in maintaining the balance of myeloid and lymphoid regeneration. In addition may play a role in the female reproductive system, auditory response and the progesterone-induced decidualization pathway. This Mus musculus (Mouse) protein is Pleiotrophin.